The primary structure comprises 96 residues: Cobalt transport protein CbiN (96 aa).

A run of 2 helical transmembrane segments spans residues 4–24 and 59–79; these read WLAAGGILLGALVVFSFVSAG and IESLLFSIQAAVGGIIIGYYL.

The protein belongs to the CbiN family. Forms an energy-coupling factor (ECF) transporter complex composed of an ATP-binding protein (A component, CbiO), a transmembrane protein (T component, CbiQ) and 2 possible substrate-capture proteins (S components, CbiM and CbiN) of unknown stoichimetry.

The protein resides in the cell membrane. The protein operates within cofactor biosynthesis; adenosylcobalamin biosynthesis. In terms of biological role, part of the energy-coupling factor (ECF) transporter complex CbiMNOQ involved in cobalt import. The protein is Cobalt transport protein CbiN of Halobacterium salinarum (strain ATCC 29341 / DSM 671 / R1).